A 152-amino-acid polypeptide reads, in one-letter code: Small ribosomal subunit protein uS11B (152 aa).

A disordered region spans residues 131–152; sequence EDVTPIPSDSTRRKGGRRGRRL. A compositionally biased stretch (basic residues) spans 143 to 152; it reads RKGGRRGRRL.

Belongs to the universal ribosomal protein uS11 family.

The protein is Small ribosomal subunit protein uS11B of Anopheles gambiae (African malaria mosquito).